A 385-amino-acid chain; its full sequence is Serine/threonine-protein kinase 52 (385 aa).

The region spanning Leu-82–Leu-356 is the Protein kinase domain. ATP contacts are provided by residues Leu-88–Val-96 and Lys-109. The Proton acceptor role is filled by Asp-227.

This sequence belongs to the protein kinase superfamily. Ser/Thr protein kinase family. As to quaternary structure, binds to CBC1. Associates with PHOT1, PHOT2, BLUS1 and PM H(+)-ATPase (e.g. AHA1). Post-translationally, autophosphorylated. Phosphorylated by HT1 in response to low CO(2) concentrations. Expressed in guard cells.

It is found in the cytoplasm. The protein localises to the cytosol. The catalysed reaction is L-seryl-[protein] + ATP = O-phospho-L-seryl-[protein] + ADP + H(+). It catalyses the reaction L-threonyl-[protein] + ATP = O-phospho-L-threonyl-[protein] + ADP + H(+). Functionally, serine/threonine protein kinase that phosphorylates proteins on serine and threonine residues. Collectively with CBC1, acts as a negative regulator of stomatal opening, probably via the inhibition of plasma membrane-type ATPases (AHA1 and AHA2) activity in guard cells, but in an abscisic acid (ABA)-independent manner. However, at low concentrations of CO(2), together with CBC1, stimulates stomatal opening via the inhibition of S-type anion channels in response to blue light (BL) and red light (RL), thus being a key component to maximize photosynthesis in the light under low CO(2) conditions. Required for temperature decrease in leaves. Downstream target of HIGH LEAF TEMPERATURE1 (HT1) during low CO(2)-induced stomatal opening. The protein is Serine/threonine-protein kinase 52 of Arabidopsis thaliana (Mouse-ear cress).